The following is a 370-amino-acid chain: Cytochrome b (370 aa).

4 helical membrane-spanning segments follow: residues 25–45 (FGSM…FLAV), 69–90 (WMMQ…YIHI), 105–125 (WLSG…GYVL), and 170–190 (FFAL…LHIL). Heme b contacts are provided by histidine 75 and histidine 89. Histidine 174 and histidine 188 together coordinate heme b. Position 193 (histidine 193) interacts with a ubiquinone. Helical transmembrane passes span 218–238 (YKDM…VSFF), 280–300 (LGGA…PFTH), 312–332 (LMQL…WTAT), and 339–358 (FTTI…ISNP).

Belongs to the cytochrome b family. The cytochrome bc1 complex contains 3 respiratory subunits (MT-CYB, CYC1 and UQCRFS1), 2 core proteins (UQCRC1 and UQCRC2) and probably 6 low-molecular weight proteins. Heme b is required as a cofactor.

The protein localises to the mitochondrion inner membrane. Component of the ubiquinol-cytochrome c reductase complex (complex III or cytochrome b-c1 complex) that is part of the mitochondrial respiratory chain. The b-c1 complex mediates electron transfer from ubiquinol to cytochrome c. Contributes to the generation of a proton gradient across the mitochondrial membrane that is then used for ATP synthesis. This Chilabothrus strigilatus strigilatus (New Providence boa constrictor) protein is Cytochrome b (MT-CYB).